The chain runs to 282 residues: Probable endonuclease 4 (282 aa).

Histidine 71, histidine 111, glutamate 147, aspartate 181, histidine 184, histidine 218, aspartate 231, histidine 233, and glutamate 263 together coordinate Zn(2+).

The protein belongs to the AP endonuclease 2 family. Zn(2+) is required as a cofactor.

The enzyme catalyses Endonucleolytic cleavage to 5'-phosphooligonucleotide end-products.. Its function is as follows. Endonuclease IV plays a role in DNA repair. It cleaves phosphodiester bonds at apurinic or apyrimidinic (AP) sites, generating a 3'-hydroxyl group and a 5'-terminal sugar phosphate. This is Probable endonuclease 4 from Protochlamydia amoebophila (strain UWE25).